The following is a 674-amino-acid chain: MRGCLQPARWLTTATLRRPLLSCPRQLPTRYNPFPRPFHHAPVLQARQPSKPLSLVEERIDAIPIERYRNFCIVAHVDHGKSTLSDRLLELTGTIKPGENKQVLDKLDVERERGITVKAQTCTMLYNHRGKDYLLHLIDTPGHVDFRTEVSRSYASCGGALLLVDASQGVQAQTVANFYLAFAQGLTLVPVINKVDLPSADPERALEQMKTTFELDVDKAVRVSAKTGLNVQELLPAIIESIPALLLVDSWYSTYKGVIILTRVFDGEVKAGDQLVSFATGLKYTVGEVGIMYPSQTPQSVLRAGQVGYIYFNPGMKRSQEAKIGDTFTKVGCESLVEPLPGFEEPKSMVFVAAYPVDSNDFHHLEESINQLLLNDRSVTMQKESSEALGAGFRLGFLGTLHCSVFEDRLRQEHGASIILTPPTVPCKVIWKDGKETIFTNPSRFPDEDTLRVKVAELQEPYVLATITFPEEYLGRVMELCEANRGEQVSMEFFTATQVILKYQLPLAQLVDDFFGKLKGSTKGYASIDYEESEWRKSNVVKLQLLVNKTPVDAVSRIVHSSQANRLGRQWVTKFKEHVERQMFEVIIQAAVGRNVLARETIKPYRKDVLAKLHASDITRRKKLLEKQKEGRKRLKAVDSAMVAIFLARVPVNNGGSKDLFVWVWMGVWIPRQL.

A mitochondrion-targeting transit peptide spans 1 to 48 (MRGCLQPARWLTTATLRRPLLSCPRQLPTRYNPFPRPFHHAPVLQARQ). Residues 66–246 (ERYRNFCIVA…AIIESIPALL (181 aa)) form the tr-type G domain. GTP is bound by residues 75–82 (AHVDHGKS), 139–143 (DTPGH), and 193–196 (NKVD).

Belongs to the TRAFAC class translation factor GTPase superfamily. Classic translation factor GTPase family. LepA subfamily.

Its subcellular location is the mitochondrion inner membrane. The enzyme catalyses GTP + H2O = GDP + phosphate + H(+). Functionally, promotes mitochondrial protein synthesis. May act as a fidelity factor of the translation reaction, by catalyzing a one-codon backward translocation of tRNAs on improperly translocated ribosomes. Binds to mitochondrial ribosomes in a GTP-dependent manner. This is Translation factor GUF1, mitochondrial from Arthroderma otae (strain ATCC MYA-4605 / CBS 113480) (Microsporum canis).